A 128-amino-acid chain; its full sequence is Fluoride-specific ion channel FluC (128 aa).

Helical transmembrane passes span 1–21 (MPER…GATA), 45–65 (LAGC…SLVS), 70–90 (LLLA…MYEI), and 99–119 (IFYS…CLYF). Glycine 78 and threonine 81 together coordinate Na(+).

This sequence belongs to the fluoride channel Fluc/FEX (TC 1.A.43) family.

Its subcellular location is the cell inner membrane. It carries out the reaction fluoride(in) = fluoride(out). With respect to regulation, na(+) is not transported, but it plays an essential structural role and its presence is essential for fluoride channel function. Functionally, fluoride-specific ion channel. Important for reducing fluoride concentration in the cell, thus reducing its toxicity. The chain is Fluoride-specific ion channel FluC from Chlorobium phaeobacteroides (strain BS1).